A 459-amino-acid chain; its full sequence is C-type lectin domain family 14 member A (459 aa).

The signal sequence occupies residues Met1–Gly21. Residues Glu22–Thr386 lie on the Extracellular side of the membrane. The C-type lectin domain maps to Ala33–Tyr173. Cysteines 143 and 162 form a disulfide. A glycan (N-linked (GlcNAc...) asparagine) is linked at Asn189. Positions Pro246–Glu288 constitute an EGF-like domain. Residues Asn306, Asn317, and Asn370 are each glycosylated (N-linked (GlcNAc...) asparagine). A helical membrane pass occupies residues Val387 to Leu407. The Cytoplasmic segment spans residues Gly408–Ala459. Ser440 is subject to Phosphoserine.

The protein localises to the membrane. The polypeptide is C-type lectin domain family 14 member A (Clec14a) (Mus musculus (Mouse)).